The primary structure comprises 395 residues: Elongation factor Tu (395 aa).

The tr-type G domain occupies 10-204; that stretch reads KPHLNIGTIG…AVDTWIELPE (195 aa). A G1 region spans residues 19-26; the sequence is GHVDHGKT. 19–26 contacts GTP; sequence GHVDHGKT. T26 contributes to the Mg(2+) binding site. The segment at 60–64 is G2; sequence GITIN. A G3 region spans residues 81–84; it reads DCPG. Residues 81 to 85 and 136 to 139 each bind GTP; these read DCPGH and NKVD. The interval 136–139 is G4; sequence NKVD. The tract at residues 174-176 is G5; sequence SAL.

This sequence belongs to the TRAFAC class translation factor GTPase superfamily. Classic translation factor GTPase family. EF-Tu/EF-1A subfamily. Monomer.

The protein localises to the cytoplasm. It carries out the reaction GTP + H2O = GDP + phosphate + H(+). Functionally, GTP hydrolase that promotes the GTP-dependent binding of aminoacyl-tRNA to the A-site of ribosomes during protein biosynthesis. The sequence is that of Elongation factor Tu from Christiangramia forsetii (strain DSM 17595 / CGMCC 1.15422 / KT0803) (Gramella forsetii).